Consider the following 231-residue polypeptide: Large ribosomal subunit protein uL1 (231 aa).

Belongs to the universal ribosomal protein uL1 family. Part of the 50S ribosomal subunit.

Binds directly to 23S rRNA. The L1 stalk is quite mobile in the ribosome, and is involved in E site tRNA release. Its function is as follows. Protein L1 is also a translational repressor protein, it controls the translation of the L11 operon by binding to its mRNA. This Polaromonas naphthalenivorans (strain CJ2) protein is Large ribosomal subunit protein uL1.